A 262-amino-acid polypeptide reads, in one-letter code: Protein NEGATIVE GRAVITROPIC RESPONSE OF ROOTS (262 aa).

A disordered region spans residues 1-40 (MKFFNWMQNKLGGKQENRKSNTSTSTTYAKPEPREEFSDW). The short motif at 43–49 (SLLAIGT) is the IGT motif element.

This sequence belongs to the LAZY family.

Involved in the control of root gravitropism. The chain is Protein NEGATIVE GRAVITROPIC RESPONSE OF ROOTS from Medicago truncatula (Barrel medic).